The following is a 185-amino-acid chain: Ribosome-recycling factor (185 aa).

Belongs to the RRF family.

The protein localises to the cytoplasm. Functionally, responsible for the release of ribosomes from messenger RNA at the termination of protein biosynthesis. May increase the efficiency of translation by recycling ribosomes from one round of translation to another. This is Ribosome-recycling factor from Shewanella sp. (strain MR-4).